A 246-amino-acid chain; its full sequence is Probable transcriptional regulatory protein CLL_A1008 (246 aa).

The protein belongs to the TACO1 family.

Its subcellular location is the cytoplasm. This Clostridium botulinum (strain Eklund 17B / Type B) protein is Probable transcriptional regulatory protein CLL_A1008.